We begin with the raw amino-acid sequence, 1414 residues long: Phenyloxazoline synthase MbtB (1414 aa).

The Carrier 1 domain occupies 5–78 (TACSEIIRAE…AWSQLVSAGT (74 aa)). The residue at position 39 (Ser-39) is an O-(pantetheine 4'-phosphoryl)serine. The interval 96-394 (EGEPFPLAPM…SSLLLDVDLT (299 aa)) is condensation/cyclization. The interval 579–975 (SYAQLRDQAS…RLPGVHAAAA (397 aa)) is adenylation. The 79-residue stretch at 1057-1135 (APRTVLQRAL…ALAQLLTGRE (79 aa)) folds into the Carrier 2 domain. An O-(pantetheine 4'-phosphoryl)serine modification is found at Ser-1094. Residues 1188 to 1413 (GAVLVFPHAG…AVARMVSADV (226 aa)) are thioesterase.

Belongs to the ATP-dependent AMP-binding enzyme family. MbtB subfamily. It depends on pantetheine 4'-phosphate as a cofactor. Post-translationally, 4'-phosphopantetheine is transferred from CoA to a specific serine in each of the two carrier protein domains, leading to their activation from apo to holo forms.

Its pathway is siderophore biosynthesis; mycobactin biosynthesis. In terms of biological role, involved in the initial steps of the mycobactin biosynthetic pathway. Putatively couples activated salicylic acid with serine or threonine and cyclizes this precursor to the hydroxyphenyloxazoline ring system present in this class of siderophores. This Mycobacterium bovis (strain ATCC BAA-935 / AF2122/97) protein is Phenyloxazoline synthase MbtB (mbtB).